The sequence spans 140 residues: Large ribosomal subunit protein uL11 (140 aa).

Belongs to the universal ribosomal protein uL11 family. As to quaternary structure, part of the ribosomal stalk of the 50S ribosomal subunit. Interacts with L10 and the large rRNA to form the base of the stalk. L10 forms an elongated spine to which L12 dimers bind in a sequential fashion forming a multimeric L10(L12)X complex. Post-translationally, one or more lysine residues are methylated.

Functionally, forms part of the ribosomal stalk which helps the ribosome interact with GTP-bound translation factors. The protein is Large ribosomal subunit protein uL11 of Campylobacter hominis (strain ATCC BAA-381 / DSM 21671 / CCUG 45161 / LMG 19568 / NCTC 13146 / CH001A).